Here is a 72-residue protein sequence, read N- to C-terminus: Translation initiation factor IF-1 (72 aa).

One can recognise an S1-like domain in the interval 1–72 (MSKEEVLEFS…TKGRITYRYK (72 aa)).

It belongs to the IF-1 family. In terms of assembly, component of the 30S ribosomal translation pre-initiation complex which assembles on the 30S ribosome in the order IF-2 and IF-3, IF-1 and N-formylmethionyl-tRNA(fMet); mRNA recruitment can occur at any time during PIC assembly.

It localises to the cytoplasm. Its function is as follows. One of the essential components for the initiation of protein synthesis. Stabilizes the binding of IF-2 and IF-3 on the 30S subunit to which N-formylmethionyl-tRNA(fMet) subsequently binds. Helps modulate mRNA selection, yielding the 30S pre-initiation complex (PIC). Upon addition of the 50S ribosomal subunit IF-1, IF-2 and IF-3 are released leaving the mature 70S translation initiation complex. The polypeptide is Translation initiation factor IF-1 (Bartonella bacilliformis (strain ATCC 35685 / KC583 / Herrer 020/F12,63)).